Reading from the N-terminus, the 367-residue chain is GMP synthase [glutamine-hydrolyzing] subunit B (367 aa).

In terms of domain architecture, GMPS ATP-PPase spans 2-190 (FDPASFVEEI…LKLPKEISER (189 aa)). Residue 29–35 (SGGVDST) participates in ATP binding.

As to quaternary structure, heterodimer composed of a glutamine amidotransferase subunit (A) and a GMP-binding subunit (B).

The enzyme catalyses XMP + L-glutamine + ATP + H2O = GMP + L-glutamate + AMP + diphosphate + 2 H(+). Its pathway is purine metabolism; GMP biosynthesis; GMP from XMP (L-Gln route): step 1/1. Catalyzes the synthesis of GMP from XMP. The protein is GMP synthase [glutamine-hydrolyzing] subunit B (guaAB) of Saccharolobus solfataricus (strain ATCC 35092 / DSM 1617 / JCM 11322 / P2) (Sulfolobus solfataricus).